The sequence spans 448 residues: Protease Do-like 8, chloroplastic (448 aa).

Positions 152-333 are serine protease; the sequence is EGNGSGVVWD…IPSSTVLKIV (182 aa). Active-site charge relay system residues include His-171, Asp-214, and Ser-292. Residues 336 to 433 form the PDZ domain; sequence LIQFSKVLRA…DKVTLKIKRG (98 aa).

Belongs to the peptidase S1C family.

The protein resides in the plastid. The protein localises to the chloroplast thylakoid lumen. Probable serine protease. The polypeptide is Protease Do-like 8, chloroplastic (DEGP8) (Arabidopsis thaliana (Mouse-ear cress)).